The following is a 207-amino-acid chain: ATP-dependent Clp protease proteolytic subunit 1 (207 aa).

Residue serine 103 is the Nucleophile of the active site. Histidine 128 is a catalytic residue.

It belongs to the peptidase S14 family. In terms of assembly, fourteen ClpP subunits assemble into 2 heptameric rings which stack back to back to give a disk-like structure with a central cavity, resembling the structure of eukaryotic proteasomes.

The protein localises to the cytoplasm. The catalysed reaction is Hydrolysis of proteins to small peptides in the presence of ATP and magnesium. alpha-casein is the usual test substrate. In the absence of ATP, only oligopeptides shorter than five residues are hydrolyzed (such as succinyl-Leu-Tyr-|-NHMec, and Leu-Tyr-Leu-|-Tyr-Trp, in which cleavage of the -Tyr-|-Leu- and -Tyr-|-Trp bonds also occurs).. Its function is as follows. Cleaves peptides in various proteins in a process that requires ATP hydrolysis. Has a chymotrypsin-like activity. Plays a major role in the degradation of misfolded proteins. The sequence is that of ATP-dependent Clp protease proteolytic subunit 1 from Synechococcus sp. (strain CC9605).